We begin with the raw amino-acid sequence, 488 residues long: Glutamyl-tRNA(Gln) amidotransferase subunit A (488 aa).

Residues K77 and S152 each act as charge relay system in the active site. The Acyl-ester intermediate role is filled by S176.

The protein belongs to the amidase family. GatA subfamily. Heterotrimer of A, B and C subunits.

It carries out the reaction L-glutamyl-tRNA(Gln) + L-glutamine + ATP + H2O = L-glutaminyl-tRNA(Gln) + L-glutamate + ADP + phosphate + H(+). Its function is as follows. Allows the formation of correctly charged Gln-tRNA(Gln) through the transamidation of misacylated Glu-tRNA(Gln) in organisms which lack glutaminyl-tRNA synthetase. The reaction takes place in the presence of glutamine and ATP through an activated gamma-phospho-Glu-tRNA(Gln). This Streptococcus uberis (strain ATCC BAA-854 / 0140J) protein is Glutamyl-tRNA(Gln) amidotransferase subunit A.